Here is a 91-residue protein sequence, read N- to C-terminus: Probable Fe(2+)-trafficking protein (91 aa).

It belongs to the Fe(2+)-trafficking protein family.

In terms of biological role, could be a mediator in iron transactions between iron acquisition and iron-requiring processes, such as synthesis and/or repair of Fe-S clusters in biosynthetic enzymes. In Xanthomonas axonopodis pv. citri (strain 306), this protein is Probable Fe(2+)-trafficking protein.